Reading from the N-terminus, the 278-residue chain is Putative phosphoenolpyruvate synthase regulatory protein (278 aa).

158-165 (GVSRSGKT) serves as a coordination point for ADP.

The protein belongs to the pyruvate, phosphate/water dikinase regulatory protein family. PSRP subfamily.

It catalyses the reaction [pyruvate, water dikinase] + ADP = [pyruvate, water dikinase]-phosphate + AMP + H(+). The catalysed reaction is [pyruvate, water dikinase]-phosphate + phosphate + H(+) = [pyruvate, water dikinase] + diphosphate. Bifunctional serine/threonine kinase and phosphorylase involved in the regulation of the phosphoenolpyruvate synthase (PEPS) by catalyzing its phosphorylation/dephosphorylation. The polypeptide is Putative phosphoenolpyruvate synthase regulatory protein (Acinetobacter baumannii (strain AYE)).